A 98-amino-acid polypeptide reads, in one-letter code: Integration host factor subunit alpha (98 aa).

A disordered region spans residues 52–73; it reads FDLRQKSERPGRNPKTGEDIPI. Residues 54 to 73 are compositionally biased toward basic and acidic residues; that stretch reads LRQKSERPGRNPKTGEDIPI.

The protein belongs to the bacterial histone-like protein family. Heterodimer of an alpha and a beta chain.

Its function is as follows. This protein is one of the two subunits of integration host factor, a specific DNA-binding protein that functions in genetic recombination as well as in transcriptional and translational control. The protein is Integration host factor subunit alpha of Pseudoalteromonas atlantica (strain T6c / ATCC BAA-1087).